A 555-amino-acid polypeptide reads, in one-letter code: Xylulose kinase (555 aa).

Substrate is bound by residues His88, Arg158, Asp274, and Asn275. ATP-binding positions include Trp357, 455–456 (GA), and Asn459.

This sequence belongs to the FGGY kinase family.

Its subcellular location is the cytoplasm. It carries out the reaction D-xylulose + ATP = D-xylulose 5-phosphate + ADP + H(+). The sequence is that of Xylulose kinase from Schizosaccharomyces pombe (strain 972 / ATCC 24843) (Fission yeast).